The following is a 373-amino-acid chain: Glutamate 5-kinase (373 aa).

Residue Lys-15 coordinates ATP. Residues Ser-55, Asp-142, and Asn-154 each coordinate substrate. ATP is bound by residues Thr-174 to Asp-175 and Thr-216 to Lys-222. The 79-residue stretch at Ala-281–Arg-359 folds into the PUA domain.

It belongs to the glutamate 5-kinase family.

The protein localises to the cytoplasm. The enzyme catalyses L-glutamate + ATP = L-glutamyl 5-phosphate + ADP. It functions in the pathway amino-acid biosynthesis; L-proline biosynthesis; L-glutamate 5-semialdehyde from L-glutamate: step 1/2. Its function is as follows. Catalyzes the transfer of a phosphate group to glutamate to form L-glutamate 5-phosphate. In Citrifermentans bemidjiense (strain ATCC BAA-1014 / DSM 16622 / JCM 12645 / Bem) (Geobacter bemidjiensis), this protein is Glutamate 5-kinase.